We begin with the raw amino-acid sequence, 974 residues long: MLQRAASNAYSWWAASHIRTKQSKWLEQSLHDMQGRVESVIKLIEEDGDSFAKRAEMYYKKRPELINFVEESYRAYRALAERYDHLSKELQTANNTIATIFPEQIQLAMDEEDEYGAPKMPKDFLQMPASGSNIPKVPPKAPIKDLKGLMSTASKQKQGKQSSKIEDAAKSGLSKNEAIEEIDKLQKDILALQTMKEFIRSSYQSSLEKFRGLENQIMEKQQKICELEDEFGEGRVIEDAEACTLMAEAALQSCQETVTQLQEKQESYTQEAREEFKKIEDACNKLNSFRHKYLGDQIDEAKVYISPIQEVDKEIESLQEKIKDQIDATSKGSLTMSQLAEKIDELVNKVVSLETAVSSQTLLLERFRAEADELQAQVQTLEDDKAALTDTHNLNIRVTAIEAKLQNIENLNKDVVNQNSCLRTHFVEARANIDHLSDKLSSVQPDEEIDGTDSSPDQVIALAEIKLEEESLKQKDHPSSAEGLKNLSTIKAEGPKNLSTIKTEGPKSLSTIKAEGPKNLSTIKAEGPKNLSTIKTEGPKSLSTIETEVPKNLSTIKTEDKEVRKQQGSSTVVSDKKTTMKHVTFAQPTPAEKGDEKVSAQSGNTSVYETHTQKSAEKDDELNWQQMLLSGLDDKENILLNEYTAILKNYKEVTKKLSDIEKKDRDTEFELTLQTRELKSAIAKRDEEIHNLRQKLSLMQQGNASENKALKEELLDPSDPSSARGLKPEDLPQIKDGDDEEDVKTILVDQRATVSPLEGKLRMSIDAILDENLDFWLRFSSAFHQIQKFKTTVHDLQNEISKARDKEMQGNSPRVDVKSEIRPLYKHMKEIQNELTVWLEQTLSLKDELERRFSALCSIQEEISKGLKEEVEDETTFSSHQAAKFQGEVLNMKHENKKVREELEAGISRVTILQEDVEKTVTQLDQEFGLTGNQSQLMQSVSKSRIPLQSFIFGTKPKKEKRSLFSRMNPNRKF.

The 81-residue stretch at 10–90 (YSWWAASHIR…ERYDHLSKEL (81 aa)) folds into the NAB domain. The interval 151 to 170 (STASKQKQGKQSSKIEDAAK) is disordered. The stretch at 173-423 (LSKNEAIEEI…DVVNQNSCLR (251 aa)) forms a coiled coil. The interval 586-614 (AQPTPAEKGDEKVSAQSGNTSVYETHTQK) is disordered. Positions 599 to 610 (SAQSGNTSVYET) are enriched in polar residues. Residues 641-697 (NEYTAILKNYKEVTKKLSDIEKKDRDTEFELTLQTRELKSAIAKRDEEIHNLRQKLS) are a coiled coil. The tract at residues 714–740 (LLDPSDPSSARGLKPEDLPQIKDGDDE) is disordered. Residues 726–736 (LKPEDLPQIKD) show a composition bias toward basic and acidic residues. Coiled-coil stretches lie at residues 784 to 807 (HQIQ…RDKE) and 882 to 905 (AAKF…ELEA).

Homodimer or homooligomer. Interacts with PRK1. In terms of processing, phosphorylated by PRK1. In terms of tissue distribution, expressed in mature pollen grains and pollen tubes, but not in style, ovary, petal, leaf, root or sepal.

It is found in the cytoplasm. Probably involved in the receptor-like kinase-mediated signal transduction pathway. This chain is Kinase-interacting protein 1, found in Petunia integrifolia (Violet-flowered petunia).